The sequence spans 385 residues: Acetate kinase (385 aa).

Position 9 (asparagine 9) interacts with Mg(2+). Lysine 16 contacts ATP. Residue arginine 87 participates in substrate binding. Aspartate 144 acts as the Proton donor/acceptor in catalysis. Residues 202-206 (HLGSG) and 277-279 (DMR) contribute to the ATP site. A Mg(2+)-binding site is contributed by glutamate 373.

This sequence belongs to the acetokinase family. Homodimer. Mg(2+) serves as cofactor. The cofactor is Mn(2+).

Its subcellular location is the cytoplasm. The catalysed reaction is acetate + ATP = acetyl phosphate + ADP. It functions in the pathway metabolic intermediate biosynthesis; acetyl-CoA biosynthesis; acetyl-CoA from acetate: step 1/2. Functionally, catalyzes the formation of acetyl phosphate from acetate and ATP. Can also catalyze the reverse reaction. In Rickettsia prowazekii (strain Madrid E), this protein is Acetate kinase.